The following is a 411-amino-acid chain: Na(+)-translocating NADH-quinone reductase subunit F (411 aa).

The helical transmembrane segment at 6–26 threads the bilayer; the sequence is AIGGVAMFTLIIMGLVAIILA. The 2Fe-2S ferredoxin-type domain maps to 35 to 129; it reads GDVTIHINDN…DMKIEIDPEF (95 aa). [2Fe-2S] cluster is bound by residues Cys72, Cys78, Cys81, and Cys113. One can recognise an FAD-binding FR-type domain in the interval 132-273; sequence VQKWECEVIS…SGPYGEFFAK (142 aa).

It belongs to the NqrF family. Composed of six subunits; NqrA, NqrB, NqrC, NqrD, NqrE and NqrF. It depends on [2Fe-2S] cluster as a cofactor. Requires FAD as cofactor.

The protein resides in the cell inner membrane. The enzyme catalyses a ubiquinone + n Na(+)(in) + NADH + H(+) = a ubiquinol + n Na(+)(out) + NAD(+). NQR complex catalyzes the reduction of ubiquinone-1 to ubiquinol by two successive reactions, coupled with the transport of Na(+) ions from the cytoplasm to the periplasm. The first step is catalyzed by NqrF, which accepts electrons from NADH and reduces ubiquinone-1 to ubisemiquinone by a one-electron transfer pathway. In Psychrobacter cryohalolentis (strain ATCC BAA-1226 / DSM 17306 / VKM B-2378 / K5), this protein is Na(+)-translocating NADH-quinone reductase subunit F.